The chain runs to 155 residues: Ribosome maturation factor RimP (155 aa).

It belongs to the RimP family.

It localises to the cytoplasm. In terms of biological role, required for maturation of 30S ribosomal subunits. The protein is Ribosome maturation factor RimP of Synechococcus sp. (strain WH7803).